A 285-amino-acid chain; its full sequence is Protease HtpX homolog (285 aa).

The next 2 helical transmembrane spans lie at 7 to 27 (TAML…MIGG) and 30 to 50 (GMTI…WFSD). His131 is a Zn(2+) binding site. Glu132 is a catalytic residue. Residue His135 coordinates Zn(2+). 2 consecutive transmembrane segments (helical) span residues 146 to 166 (ITAT…FFGG) and 177 to 197 (IAGI…QMAI). Glu202 serves as a coordination point for Zn(2+).

Belongs to the peptidase M48B family. Zn(2+) serves as cofactor.

It is found in the cell inner membrane. In Burkholderia cenocepacia (strain ATCC BAA-245 / DSM 16553 / LMG 16656 / NCTC 13227 / J2315 / CF5610) (Burkholderia cepacia (strain J2315)), this protein is Protease HtpX homolog.